Here is a 1065-residue protein sequence, read N- to C-terminus: Ceruloplasmin (1065 aa).

A signal peptide spans 1–19 (MKILILGIFLFLCSTPAWA). 2 Plastocyanin-like domains span residues 20 to 200 (KEKH…LIIC) and 209 to 357 (KEKH…VQEC). The Na(+) site is built by Tyr-55, Gly-64, and Tyr-67. Cu(2+)-binding residues include His-120 and His-122. His-120 is an O2 binding site. Ca(2+) is bound at residue Lys-128. N-linked (GlcNAc...) (complex) asparagine glycosylation is present at Asn-138. 3 residues coordinate Ca(2+): Gln-143, Asp-146, and Asp-147. An intrachain disulfide couples Cys-174 to Cys-200. Cu(2+)-binding residues include His-180 and His-182. His-180 is an O2 binding site. Na(+) is bound at residue Ser-256. Cys-276 and Cys-357 are joined by a disulfide. His-295, Cys-338, and His-343 together coordinate Cu(2+). Residues Asn-358 and Asn-397 are each glycosylated (N-linked (GlcNAc...) (complex) asparagine). 2 Plastocyanin-like domains span residues 370-560 (HVRH…MKIC) and 570-718 (RQKD…VNQC). Na(+) is bound by residues Phe-408, Gly-417, and Tyr-420. Cysteines 534 and 560 form a disulfide. Asn-588 is a glycosylation site (N-linked (GlcNAc...) asparagine). Ser-617 contributes to the Na(+) binding site. Cys-637 and Cys-718 are oxidised to a cystine. His-656, Cys-699, His-704, and Met-709 together coordinate Cu(2+). Residue Cys-699 is the Nucleophile; for glutathione peroxidase activity of the active site. Ser-722 carries the post-translational modification Phosphoserine; by FAM20C. Plastocyanin-like domains are found at residues 730-900 (GERT…LIVC) and 908-1061 (FNPR…QNED). Asn-762 carries N-linked (GlcNAc...) (complex) asparagine glycosylation. Na(+) contacts are provided by Phe-767, Gly-776, and Tyr-779. Cysteines 874 and 900 form a disulfide. Residue Asn-926 is glycosylated (N-linked (GlcNAc...) asparagine). A Na(+)-binding site is contributed by Ser-955. Positions 994, 997, 999, 1039, 1040, 1041, 1045, and 1050 each coordinate Cu(2+). Residues His-997 and His-999 each contribute to the O2 site. An O2-binding site is contributed by His-1041.

The protein belongs to the multicopper oxidase family. As to quaternary structure, found in a complex with MPO and LTF; interacts directly with MPO and LTF, which allows Fe(3+) incorporation into LTF, activation of CP ferroxidase activity and protection of CP antioxidant properties by MPO. Requires Cu(2+) as cofactor. In terms of tissue distribution, expressed by the liver and secreted in plasma.

The protein localises to the secreted. The catalysed reaction is 4 Fe(2+) + O2 + 4 H(+) = 4 Fe(3+) + 2 H2O. The enzyme catalyses 4 Cu(+) + O2 + 4 H(+) = 4 Cu(2+) + 2 H2O. It catalyses the reaction a hydroperoxide + 2 glutathione = an alcohol + glutathione disulfide + H2O. It carries out the reaction 4 nitric oxide + O2 + 2 H2O = 4 nitrite + 4 H(+). The catalysed reaction is 2 glutathione + H2O2 = glutathione disulfide + 2 H2O. Multifunctional blue, copper-binding (6-7 atoms per molecule) glycoprotein. It has ferroxidase activity oxidizing Fe(2+) to Fe(3+) without releasing radical oxygen species. It is involved in iron transport across the cell membrane. Copper ions provide a large number of enzymatic activites. Oxidizes highly toxic ferrous ions to the ferric state for further incorporation onto apo-transferrins, catalyzes Cu(+) oxidation and promotes the oxidation of biogenic amines such as norepinephrin and serotonin. Provides Cu(2+) ions for the ascorbate-mediated deaminase degradation of the heparan sulfate chains of GPC1. Has glutathione peroxidase-like activity, can remove both hydrogen peroxide and lipid hydroperoxide in the presence of thiols. Also shows NO-oxidase and NO2 synthase activities that determine endocrine NO homeostasis. This is Ceruloplasmin from Homo sapiens (Human).